The chain runs to 446 residues: Exodeoxyribonuclease 7 large subunit (446 aa).

The protein belongs to the XseA family. As to quaternary structure, heterooligomer composed of large and small subunits.

Its subcellular location is the cytoplasm. It carries out the reaction Exonucleolytic cleavage in either 5'- to 3'- or 3'- to 5'-direction to yield nucleoside 5'-phosphates.. Its function is as follows. Bidirectionally degrades single-stranded DNA into large acid-insoluble oligonucleotides, which are then degraded further into small acid-soluble oligonucleotides. The sequence is that of Exodeoxyribonuclease 7 large subunit from Streptococcus agalactiae serotype III (strain NEM316).